We begin with the raw amino-acid sequence, 316 residues long: Petrobactin import system permease protein YclN (316 aa).

The next 8 helical transmembrane spans lie at 5–25, 49–69, 94–114, 133–153, 181–201, 224–244, 268–288, and 290–310; these read YLFI…VEDL, LISI…MQQI, LLLF…VFAL, IFIP…ATFI, LLYL…KFTL, LIIV…LPFL, VLLG…IIFP, and EISI…FMLL.

It belongs to the binding-protein-dependent transport system permease family. FecCD subfamily. In terms of assembly, the complex is composed of two ATP-binding proteins (YclP), two transmembrane proteins (YclN and YclO) and a solute-binding protein (YclQ).

The protein localises to the cell membrane. In terms of biological role, part of the ABC transporter complex YclNOPQ involved in uptake of ferric-petrobactin. Petrobactin is a photoreactive 3,4-catecholate siderophore produced by many members of the B.cereus group, including B.anthracis. Probably responsible for the translocation of the substrate across the membrane. This is Petrobactin import system permease protein YclN (yclN) from Bacillus subtilis (strain 168).